We begin with the raw amino-acid sequence, 548 residues long: Beta-lactamase-like protein 2 (548 aa).

An N-terminal signal peptide occupies residues 1-24 (MKIMNKQSITIFLIICFLINLILS). Residues Asn-237, Asn-258, Asn-443, and Asn-459 are each glycosylated (N-linked (GlcNAc...) asparagine).

Belongs to the beta-lactamase family.

The protein resides in the secreted. The polypeptide is Beta-lactamase-like protein 2 (Dictyostelium discoideum (Social amoeba)).